Consider the following 519-residue polypeptide: cAMP-dependent protein kinase catalytic subunit (519 aa).

The tract at residues 1-195 is disordered; sequence MLPDTGILSP…SQTLQKAENA (195 aa). Polar residues-rich tracts occupy residues 10–25, 116–159, and 173–191; these read PFTT…SQTL, VTPS…TSPI, and TPVN…TLQK. In terms of domain architecture, Protein kinase spans 208 to 463; it reads FNFQRTLGTG…SRSVLEHPWF (256 aa). ATP is bound by residues 214–222 and K237; that span reads LGTGSFGRV. D331 serves as the catalytic Proton acceptor. Positions 464 to 519 constitute an AGC-kinase C-terminal domain; it reads AEVNWERLLSKQIEPPYVPPVRGGIGDASLFDKYPEETEEYGKDGPDQYGHFFTDF.

It belongs to the protein kinase superfamily. Ser/Thr protein kinase family.

It carries out the reaction L-seryl-[protein] + ATP = O-phospho-L-seryl-[protein] + ADP + H(+). The catalysed reaction is L-threonyl-[protein] + ATP = O-phospho-L-threonyl-[protein] + ADP + H(+). Activated by cAMP. Functionally, functions downstream of adenylate cyclase to regulate trap-development for nematode capture. In Arthrobotrys oligospora (strain ATCC 24927 / CBS 115.81 / DSM 1491) (Nematode-trapping fungus), this protein is cAMP-dependent protein kinase catalytic subunit.